The primary structure comprises 389 residues: 5-hydroxytryptamine receptor 1B (389 aa).

Residues 1 to 45 (MGNPEASCTPPAVLGSQTGLPHANVSAPPNNCSAPSHIYQDSIAL) are Extracellular-facing. 2 N-linked (GlcNAc...) asparagine glycosylation sites follow: Asn-24 and Asn-31. Residues 46–71 (PWKVLLVVLLALITLATTLSNAFVIA) traverse the membrane as a helical segment. Over 72–85 (TVYRTRKLHTPANY) the chain is Cytoplasmic. The helical transmembrane segment at 86 to 110 (LIASLAFTDLLVSILVMPISTMYTV) threads the bilayer. Residues 111-118 (TGRWTLGQ) lie on the Extracellular side of the membrane. A helical transmembrane segment spans residues 119–144 (ALCDFWLSSDITCCTASIMHLCVIAL). A disulfide bridge connects residues Cys-121 and Cys-198. 2 residues coordinate ergotamine: Asp-128 and Thr-133. Positions 145–147 (DRY) match the DRY motif; important for ligand-induced conformation changes and signaling motif. Topologically, residues 145–164 (DRYWAITDAVGYSAKRTPRR) are cytoplasmic. A helical membrane pass occupies residues 165–183 (AAGMIALVWVFSICISLPP). Topologically, residues 184–204 (FFWRQAKAEEEVLDCLVNTDH) are extracellular. An ergotamine-binding site is contributed by Val-200. A helical transmembrane segment spans residues 205–228 (VLYTVYSTGGAFYLPTLLLIALYG). Topologically, residues 229 to 314 (RIYVEARSRI…AARERKATKT (86 aa)) are cytoplasmic. The chain crosses the membrane as a helical span at residues 315–336 (LGVILGAFIVCWLPFFIISLVM). The Extracellular segment spans residues 337–346 (PICKDACWFH). A helical transmembrane segment spans residues 347–369 (MAIFDFFTWLGYLNSLINPIIYT). Positions 364 to 368 (NPIIY) match the NPxxY motif; important for ligand-induced conformation changes and signaling motif. At 370-389 (MSNEDFKQAFHKLIRFKCTT) the chain is on the cytoplasmic side. Cys-387 carries S-palmitoyl cysteine lipidation.

Belongs to the G-protein coupled receptor 1 family. Homodimer. Heterodimer with HTR1D. Phosphorylated. Desensitization of the receptor may be mediated by its phosphorylation. Post-translationally, palmitoylated.

It is found in the cell membrane. In terms of biological role, G-protein coupled receptor for 5-hydroxytryptamine (serotonin). Also functions as a receptor for ergot alkaloid derivatives, various anxiolytic and antidepressant drugs and other psychoactive substances, such as lysergic acid diethylamide (LSD). Ligand binding causes a conformation change that triggers signaling via guanine nucleotide-binding proteins (G proteins) and modulates the activity of downstream effectors, such as adenylate cyclase. HTR1B is coupled to G(i)/G(o) G alpha proteins and mediates inhibitory neurotransmission by inhibiting adenylate cyclase activity. Arrestin family members inhibit signaling via G proteins and mediate activation of alternative signaling pathways. Regulates the release of 5-hydroxytryptamine, dopamine and acetylcholine in the brain, and thereby affects neural activity, nociceptive processing, pain perception, mood and behavior. Besides, plays a role in vasoconstriction of cerebral arteries. This chain is 5-hydroxytryptamine receptor 1B (HTR1B), found in Cavia porcellus (Guinea pig).